Here is a 118-residue protein sequence, read N- to C-terminus: Ferredoxin-thioredoxin reductase, catalytic chain (118 aa).

Residue Cys56 participates in [4Fe-4S] cluster binding. The active-site Nucleophile is the Cys58. The cysteines at positions 58 and 88 are disulfide-linked. Cys75, Cys77, and Cys86 together coordinate [4Fe-4S] cluster.

The protein belongs to the ferredoxin thioredoxin reductase beta subunit family. In terms of assembly, heterodimer of subunit A (variable subunit) and subunit B (catalytic subunit). Heterodimeric FTR forms a complex with ferredoxin and thioredoxin. Requires [4Fe-4S] cluster as cofactor.

The enzyme catalyses [thioredoxin]-disulfide + 2 reduced [2Fe-2S]-[ferredoxin] + 2 H(+) = [thioredoxin]-dithiol + 2 oxidized [2Fe-2S]-[ferredoxin]. Its function is as follows. Catalytic subunit of the ferredoxin-thioredoxin reductase (FTR), which catalyzes the two-electron reduction of thioredoxins by the electrons provided by reduced ferredoxin. This Synechocystis sp. (strain ATCC 27184 / PCC 6803 / Kazusa) protein is Ferredoxin-thioredoxin reductase, catalytic chain.